A 158-amino-acid polypeptide reads, in one-letter code: Large ribosomal subunit protein uL13 (158 aa).

Residues 129–158 (PEHGHHAQKPVALDFGAMNNKNGRGNNAGR) form a disordered region. Over residues 144 to 158 (GAMNNKNGRGNNAGR) the composition is skewed to low complexity.

Belongs to the universal ribosomal protein uL13 family. Part of the 50S ribosomal subunit.

In terms of biological role, this protein is one of the early assembly proteins of the 50S ribosomal subunit, although it is not seen to bind rRNA by itself. It is important during the early stages of 50S assembly. This Anaplasma phagocytophilum (strain HZ) protein is Large ribosomal subunit protein uL13.